We begin with the raw amino-acid sequence, 357 residues long: MAIPLPAFYKWDVYDSKLNNVHGHVECRYTAQTGYWSDPCFVQSPFLSVHGLAPGLNYGQQVYEGIQARRTARNEILIFRPGASADRMAKSATAVSMPPVPYELFVRSVHMAVALNADYVPPHDFHGSMYIRPCQFGSSCQIGLQPPDEFIFCVFVQPHIALHGHGSLRALIAEDFDRAATRGTGHVKIGGNYAPVIRWTQSAKKEENGGWDVLLHVDSKTQTRIDEFSTSAFIGTKYAEEQNEPPQIILPESAAAIQSITSDSVAWLAKSFGWNIVKQPVTIDELASLSEVMAVGTAAGLVPVSCIRHNSTNRTFEFPSAGPMYRQLKETLDNIQRGRSSDSFGWCEKLRYAEFVQ.

Residue Arg87 coordinates pyridoxal 5'-phosphate. Position 188 is an N6-(pyridoxal phosphate)lysine (Lys188). A pyridoxal 5'-phosphate-binding site is contributed by Glu227.

It belongs to the class-IV pyridoxal-phosphate-dependent aminotransferase family. The cofactor is pyridoxal 5'-phosphate.

Its pathway is mycotoxin biosynthesis; HC-toxin biosynthesis. Functionally, aminotransferase, part of the diffuse TOX2 gene cluster that mediates the biosynthesis of the HC-toxin, cyclic tetrapeptide of structure cyclo(D-Pro-L-Ala-D-Ala-L-Aeo), where Aeo stands for 2-amino-9,10-epoxi-8-oxodecanoic acid. HC-toxin is a determinant of specificity and virulence in the interaction between the producing fungus and its host, maize. TOXF contributes to the synthesis of 2-amino-9,10-epoxi-8-oxodecanoic acid, an essential precursor for the production of the major forms of HC-toxin by the non-ribosomal peptide synthetase HTS1. The sequence is that of Aminotransferase TOXF (TOXF) from Cochliobolus carbonum (Maize leaf spot fungus).